The following is a 107-amino-acid chain: Snaclec VP12 subunit A (107 aa).

Disulfide bonds link Cys-4/Cys-15 and Cys-32/Cys-107. The region spanning 11-107 (YEGNCYKAFD…ECGLAYPFIC (97 aa)) is the C-type lectin domain.

This sequence belongs to the snaclec family. In terms of assembly, heterodimer of subunits alpha and beta; disulfide-linked. In terms of tissue distribution, expressed by the venom gland.

It is found in the secreted. Functionally, inhibits integrin alpha-2/beta-1- (ITGA2/ITGB1) dependent melanoma metastasis. The protein is Snaclec VP12 subunit A of Daboia palaestinae (Palestine viper).